A 1055-amino-acid chain; its full sequence is Elongation factor 3 (1055 aa).

Residue Val45 coordinates ADP. HEAT repeat units lie at residues 45 to 86 (VEFF…NGAA), 96 to 133 (SAEN…SMNP), 135 to 172 (ASFV…SAPY), 175 to 213 (GEAM…LVEN), 217 to 255 (EKFV…APTI), 257 to 290 (LIAP…LVDS), and 295 to 337 (RPFL…VPVE). ABC transporter domains lie at 447–659 (CNIE…SYYQ) and 687–1004 (LKMR…KKAG). Positions 723, 933, 936, and 962 each coordinate ADP. Disordered regions lie at residues 987–1006 (HNWV…AGDD) and 1024–1055 (EKKL…DEEL). Over residues 1033 to 1044 (RKAKKDRMARRK) the composition is skewed to basic residues.

The protein belongs to the ABC transporter superfamily. ABCF family. EF3 subfamily. In terms of assembly, associates with ribosomes.

It localises to the cytoplasm. The protein localises to the cytosol. The catalysed reaction is ATP + H2O = ADP + phosphate + H(+). Its pathway is protein biosynthesis; polypeptide chain elongation. In terms of biological role, ribosome-dependent ATPase that functions in cytoplasmic translation elongation. Required for the ATP-dependent release of deacylated tRNA from the ribosomal E-site during protein biosynthesis. Stimulates the eEF1A-dependent binding of aminoacyl-tRNA to the ribosomal A-site, which has reduced affinity for tRNA as long as the E-site is occupied. Assists translation termination by stimulating the release of nascent protein from the ribosome by release factors. Appears to target calcium-channel protein CCH1 to the plasma membrane. The chain is Elongation factor 3 from Cryptococcus neoformans var. neoformans serotype D (strain JEC21 / ATCC MYA-565) (Filobasidiella neoformans).